Consider the following 372-residue polypeptide: Carbamoyl phosphate synthase small chain (372 aa).

The interval 1–182 is CPSase; it reads MTLYCKRGYK…PKAPIVHLGN (182 aa). The L-glutamine site is built by S53, G234, and G236. A Glutamine amidotransferase type-1 domain is found at 186-372; sequence TIVVVDCGVK…KFKKMVSRNA (187 aa). C262 serves as the catalytic Nucleophile. L-glutamine-binding residues include L263, Q266, N304, G306, and Y307. Active-site residues include H347 and E349.

Belongs to the CarA family. Composed of two chains; the small (or glutamine) chain promotes the hydrolysis of glutamine to ammonia, which is used by the large (or ammonia) chain to synthesize carbamoyl phosphate. Tetramer of heterodimers (alpha,beta)4.

The enzyme catalyses hydrogencarbonate + L-glutamine + 2 ATP + H2O = carbamoyl phosphate + L-glutamate + 2 ADP + phosphate + 2 H(+). The catalysed reaction is L-glutamine + H2O = L-glutamate + NH4(+). Its pathway is amino-acid biosynthesis; L-arginine biosynthesis; carbamoyl phosphate from bicarbonate: step 1/1. It participates in pyrimidine metabolism; UMP biosynthesis via de novo pathway; (S)-dihydroorotate from bicarbonate: step 1/3. Small subunit of the glutamine-dependent carbamoyl phosphate synthetase (CPSase). CPSase catalyzes the formation of carbamoyl phosphate from the ammonia moiety of glutamine, carbonate, and phosphate donated by ATP, constituting the first step of 2 biosynthetic pathways, one leading to arginine and/or urea and the other to pyrimidine nucleotides. The small subunit (glutamine amidotransferase) binds and cleaves glutamine to supply the large subunit with the substrate ammonia. This chain is Carbamoyl phosphate synthase small chain, found in Sulfurisphaera tokodaii (strain DSM 16993 / JCM 10545 / NBRC 100140 / 7) (Sulfolobus tokodaii).